We begin with the raw amino-acid sequence, 142 residues long: Large ribosomal subunit protein mL42 (142 aa).

A mitochondrion-targeting transit peptide spans 1–31; the sequence is MAAAVKWAISNRTIWKHLLPIQNGALSSACH.

This sequence belongs to the mitochondrion-specific ribosomal protein mL42 family. As to quaternary structure, component of the mitochondrial ribosome large subunit (39S) which comprises a 16S rRNA and about 50 distinct proteins. Component of the mitochondrial ribosome small subunit (28S) which comprises a 12S rRNA and about 30 distinct proteins.

The protein resides in the mitochondrion. The chain is Large ribosomal subunit protein mL42 (Mrpl42) from Mus musculus (Mouse).